The following is a 168-amino-acid chain: G/U mismatch-specific DNA glycosylase (168 aa).

This sequence belongs to the uracil-DNA glycosylase (UDG) superfamily. TDG/mug family. Binds DNA as a monomer.

It is found in the cytoplasm. It catalyses the reaction Specifically hydrolyzes mismatched double-stranded DNA and polynucleotides, releasing free uracil.. Its function is as follows. Excises ethenocytosine and uracil, which can arise by alkylation or deamination of cytosine, respectively, from the corresponding mispairs with guanine in ds-DNA. It is capable of hydrolyzing the carbon-nitrogen bond between the sugar-phosphate backbone of the DNA and the mispaired base. The complementary strand guanine functions in substrate recognition. Required for DNA damage lesion repair in stationary-phase cells. The sequence is that of G/U mismatch-specific DNA glycosylase from Escherichia coli (strain SMS-3-5 / SECEC).